The chain runs to 389 residues: Phospho-N-acetylmuramoyl-pentapeptide-transferase (389 aa).

10 consecutive transmembrane segments (helical) span residues 25-45 (RAVMATITALGIGLVCGPWVI), 73-93 (TMGGVLILIGIAVATLLWGDL), 97-117 (FIWIVMLVTFGFGVIGWVDDY), 135-155 (FWQSVIGLFAAVYLAFSVSEA), 190-210 (ISYPLGVWGFIVLTYFVIVGA), 222-242 (GLVIMPVVLVGASLGVFAYVM), 258-278 (GAGELLIFCSAMGGAGLAFLW), 286-306 (VFMGDVGALALGGALGTVAVI), 311-331 (IVLFIMGGIFVAETLSVMLQV), and 366-386 (QVVVRFWIITLMLCLFGLSTL).

This sequence belongs to the glycosyltransferase 4 family. MraY subfamily. The cofactor is Mg(2+).

The protein localises to the cell inner membrane. The catalysed reaction is UDP-N-acetyl-alpha-D-muramoyl-L-alanyl-gamma-D-glutamyl-meso-2,6-diaminopimeloyl-D-alanyl-D-alanine + di-trans,octa-cis-undecaprenyl phosphate = di-trans,octa-cis-undecaprenyl diphospho-N-acetyl-alpha-D-muramoyl-L-alanyl-D-glutamyl-meso-2,6-diaminopimeloyl-D-alanyl-D-alanine + UMP. It participates in cell wall biogenesis; peptidoglycan biosynthesis. Its function is as follows. Catalyzes the initial step of the lipid cycle reactions in the biosynthesis of the cell wall peptidoglycan: transfers peptidoglycan precursor phospho-MurNAc-pentapeptide from UDP-MurNAc-pentapeptide onto the lipid carrier undecaprenyl phosphate, yielding undecaprenyl-pyrophosphoryl-MurNAc-pentapeptide, known as lipid I. This Burkholderia vietnamiensis (strain G4 / LMG 22486) (Burkholderia cepacia (strain R1808)) protein is Phospho-N-acetylmuramoyl-pentapeptide-transferase.